Consider the following 2336-residue polypeptide: Genome polyprotein (2336 aa).

Positions 1 to 201 constitute a Peptidase C28 domain; the sequence is MNTTDCFIAL…WKAKVQKRLK (201 aa). The Cytoplasmic portion of the chain corresponds to 1 to 1481; it reads MNTTDCFIAL…SFVKRAFKRL (1481 aa). Active-site for leader protease activity residues include Cys-51, His-148, and Asp-163. Disordered stretches follow at residues 197 to 218 and 238 to 265; these read QKRLKGAGQSSPATGSQNQSGN and QLGDNAISGGSNEGSTDTTSTHTTNTQN. The N-myristoyl glycine; by host moiety is linked to residue Gly-202. Composition is skewed to polar residues over residues 204 to 218 and 238 to 251; these read GQSSPATGSQNQSGN and QLGDNAISGGSNEG. The segment covering 252–265 has biased composition (low complexity); the sequence is STDTTSTHTTNTQN. An antigenic epitope region spans residues 789–797; that stretch reads ALLRAATYY. The short motif at 869-871 is the Cell attachment site element; it reads RGD. Residues 1190–1354 form the SF3 helicase domain; the sequence is NVHIANLCKV…DGYKVNNKLD (165 aa). Residue 1218–1225 participates in ATP binding; it reads GKSGQGKS. Residues 1482-1502 lie within the membrane without spanning it; the sequence is KENFEIVALCLTLLANIVIMI. Over 1503 to 2336 the chain is Cytoplasmic; it reads RETRKRQQMV…NAVCGDAQSL (834 aa). Residues 1556–1591 are disordered; that stretch reads PGHRASDDVNSEPARPVEEQPQAEGPYTGPLERQKP. An O-(5'-phospho-RNA)-tyrosine mark is found at Tyr-1582, Tyr-1605, and Tyr-1629. The Peptidase C3 domain occupies 1653-1849; that stretch reads APPTDLQKMV…YCSCVSRSML (197 aa). His-1696 acts as the For protease 3C activity; Proton donor/acceptor in catalysis. Residues Asp-1734 and Cys-1813 each act as for protease 3C activity in the active site. The short motif at 1879–1887 is the Nuclear localization signal element; sequence MRKTKLAPT. A RdRp catalytic domain is found at 2097-2215; that stretch reads KNVWDVDYSA…ASDYDLDFEA (119 aa). The For RdRp activity role is filled by Asp-2201.

It belongs to the picornaviruses polyprotein family. As to quaternary structure, interacts with host ISG15. Interacts (via R-G-D motif) with host ITGAV/ITGB6. Interacts with host MAVS; this interaction inhibits binding of host TRAF3 to MAVS, thereby suppressing interferon-mediated responses. In terms of assembly, forms homooligomers. As to quaternary structure, homohexamer. Interacts with host VIM. Interacts with host BECN1. Interacts with host DCTN3. In terms of assembly, interacts with RNA-dependent RNA polymerase; this interaction allows 3B-1 to binds 2 polymerases and act as a primer. It also allows the recruitment of the RNA-dependent RNA polymerase to host membranes. As to quaternary structure, interacts with RNA-dependent RNA polymerase; this interaction allows 3B-2 to act as a primer. Interacts with RNA-dependent RNA polymerase; this interaction allows 3B-3 to act as a primer. In terms of assembly, interacts with 3B-1; this interaction allows 3B-1 to binds 2 polymerases and act as a primer. It also allows the recruitment of the RNA-dependent RNA polymerase to host membranes. Interacts with 3B-2; this interaction allows 3B-2 to act as a primer. Interacts with 3B-3; this interaction allows 3B-3 to act as a primer. Removes six residues from its own C-terminus, generating sLb(pro). Post-translationally, specific enzymatic cleavages in vivo by the viral proteases yield a variety of precursors and mature proteins. The polyprotein seems to be cotranslationally cleaved at the 2A/2B junction by a ribosomal skip from one codon to the next without formation of a peptide bond. This process would release the L-P1-2A peptide from the translational complex. In terms of processing, during virion maturation, immature virions are rendered infectious following cleavage of VP0 into VP4 and VP2. This maturation seems to be an autocatalytic event triggered by the presence of RNA in the capsid and is followed by a conformational change of the particle. Myristoylation is required during RNA encapsidation and formation of the mature virus particle. Post-translationally, uridylylated by the polymerase and covalently linked to the 5'-end of genomic RNA. These uridylylated forms act as a nucleotide-peptide primer for the polymerase.

It is found in the host nucleus. The protein localises to the host cytoplasm. The protein resides in the virion. Its subcellular location is the host endoplasmic reticulum membrane. It localises to the host cytoplasmic vesicle membrane. The enzyme catalyses Autocatalytically cleaves itself from the polyprotein of the foot-and-mouth disease virus by hydrolysis of a Lys-|-Gly bond, but then cleaves host cell initiation factor eIF-4G at bonds -Gly-|-Arg- and -Lys-|-Arg-.. It catalyses the reaction a ribonucleoside 5'-triphosphate + H2O = a ribonucleoside 5'-diphosphate + phosphate + H(+). The catalysed reaction is RNA(n) + a ribonucleoside 5'-triphosphate = RNA(n+1) + diphosphate. It carries out the reaction Selective cleavage of Gln-|-Gly bond in the poliovirus polyprotein. In other picornavirus reactions Glu may be substituted for Gln, and Ser or Thr for Gly.. Autocatalytically cleaves itself from the polyprotein at the L/VP0 junction. Also cleaves the host translation initiation factors EIF4G1 and EIF4G3, in order to shut off the capped cellular mRNA transcription. Plays a role in counteracting host innate antiviral response using diverse mechanisms. Possesses a deubiquitinase activity acting on both 'Lys-48' and 'Lys-63'-linked polyubiquitin chains. In turn, inhibits the ubiquitination and subsequent activation of key signaling molecules of type I IFN response such as host RIGI, TBK1, TRAF3 and TRAF6. Inhibits host NF-kappa-B activity by inducing a decrease in RELA mRNA levels. Cleaves a peptide bond in the C-terminus of host ISG15, resulting in the damaging of this modifier that can no longer be attached to target proteins. Also cleaves host G3BP1 and G3BP2 in order to inhibit cytoplasmic stress granules assembly. Functionally, lies on the inner surface of the capsid shell. After binding to the host receptor, the capsid undergoes conformational changes. Capsid protein VP4 is released, capsid protein VP1 N-terminus is externalized, and together, they shape a pore in the host membrane through which the viral genome is translocated into the host cell cytoplasm. After genome has been released, the channel shrinks. Its function is as follows. Forms an icosahedral capsid of pseudo T=3 symmetry with capsid proteins VP1 and VP3. The capsid is composed of 60 copies of each capsid protein organized in the form of twelve pentamers and encloses the viral positive strand RNA genome. Upon acidifcation in the endosome, dissociates into pentamers. In terms of biological role, forms an icosahedral capsid of pseudo T=3 symmetry with capsid proteins VP0 and VP3. The capsid is composed of 60 copies of each capsid protein organized in the form of twelve pentamers and encloses the viral positive strand RNA genome. Upon acidifcation in the endosome, dissociates into pentamers. Forms an icosahedral capsid of pseudo T=3 symmetry with capsid proteins VP2 and VP3. The capsid is composed of 60 copies of each capsid protein organized in the form of twelve pentamers and encloses the viral positive strand RNA genome. Mediates cell entry by attachment to an integrin receptor, usually host ITGAV/ITGB6. In addition, targets host MAVS to suppress type I IFN pathway. Upon acidifcation in the endosome, dissociates into pentamers. Functionally, mediates self-processing of the polyprotein by a translational effect termed 'ribosome skipping'. Mechanistically, 2A-mediated cleavage occurs between the C-terminal glycine and the proline of the downstream protein 2B. In the case of foot-and-mouth disease virus, the 2A oligopeptide is post-translationally 'trimmed' from the C-terminus of the upstream protein 1D by 3C proteinase. Its function is as follows. Plays an essential role in the virus replication cycle by acting as a viroporin. Creates a pore in the host endoplasmic reticulum and as a consequence releases Ca2+ in the cytoplasm of infected cell. In turn, high levels of cytoplasmic calcium may trigger membrane trafficking and transport of viral ER-associated proteins to viroplasms, sites of viral genome replication. In terms of biological role, associates with and induces structural rearrangements of intracellular membranes. Triggers host autophagy by interacting with host BECN1 and thereby promotes viral replication. Participates in viral replication and interacts with host DHX9. Displays RNA-binding, nucleotide binding and NTPase activities. May play a role in virion morphogenesis and viral RNA encapsidation by interacting with the capsid protein VP3. Plays important roles in virus replication, virulence and host range. Cooperates with host DDX56 to inhibit IRF3 nuclear translocation and subsequent type I interferon production. Functionally, covalently linked to the 5'-end of both the positive-strand and negative-strand genomic RNAs. Acts as a genome-linked replication primer. Its function is as follows. Cysteine protease that generates mature viral proteins from the precursor polyprotein. In addition to its proteolytic activity, binds to viral RNA and thus influences viral genome replication. RNA and substrate bind cooperatively to the protease. In terms of biological role, RNA-directed RNA polymerase 3D-POL replicates genomic and antigenomic RNA by recognizing replications specific signals. Covalently attaches UMP to a tyrosine of VPg, which is used to prime RNA synthesis. The positive stranded RNA genome is first replicated at virus induced membranous vesicles, creating a dsRNA genomic replication form. This dsRNA is then used as template to synthesize positive stranded RNA genomes. ss(+)RNA genomes are either translated, replicated or encapsidated. This is Genome polyprotein from Foot-and-mouth disease virus (isolate -/Azerbaijan/A22-550/1965 serotype A) (FMDV).